The primary structure comprises 312 residues: Olfactory receptor 1493 (312 aa).

Residues 1 to 23 (MNNKTVITHFLLLGLPIPPEHQQ) lie on the Extracellular side of the membrane. Asn-3 carries an N-linked (GlcNAc...) asparagine glycan. The chain crosses the membrane as a helical span at residues 24-48 (LFFALFLIMYLTTFLGNLLIVVLVQ). Topologically, residues 49–55 (LDSHLHT) are cytoplasmic. The chain crosses the membrane as a helical span at residues 56-77 (PMYLFLSNLSFSDLCFSSVTML). The Extracellular segment spans residues 78–98 (KLLQNIQSQVPSISYAGCLTQ). Residues Cys-95 and Cys-187 are joined by a disulfide bond. The chain crosses the membrane as a helical span at residues 99-118 (IFFFLLFGYLGNFLLVAMAY). Residues 119–137 (DRYVAICFPLHYTNIMSHK) lie on the Cytoplasmic side of the membrane. Residues 138–156 (LCTCLLLVFWIMTSSHAMM) traverse the membrane as a helical segment. At 157–194 (HTLLAARLSFCENNVLLNFFCDLFVLLKLACSDTYVNE) the chain is on the extracellular side. Residues 195–217 (LMIHIMGVIIIVIPFVLIVISYA) traverse the membrane as a helical segment. Residues 218 to 234 (KIISSILKVPSTQSIHK) lie on the Cytoplasmic side of the membrane. Residues 235 to 258 (VFSTCGSHLSVVSLFYGTIIGLYL) traverse the membrane as a helical segment. Residues 259–270 (CPSGDNFSLKGS) are Extracellular-facing. A helical membrane pass occupies residues 271 to 290 (AMAMMYTVVTPMLNPFIYSL). At 291 to 312 (RNRDMKQALIRVTCSKKISLPW) the chain is on the cytoplasmic side.

This sequence belongs to the G-protein coupled receptor 1 family. As to expression, olfactory epithelium.

The protein resides in the cell membrane. Odorant receptor. This Rattus norvegicus (Rat) protein is Olfactory receptor 1493 (Olr1493).